A 206-amino-acid polypeptide reads, in one-letter code: Putative 3-methyladenine DNA glycosylase (206 aa).

This sequence belongs to the DNA glycosylase MPG family.

This Salinibacter ruber (strain DSM 13855 / M31) protein is Putative 3-methyladenine DNA glycosylase.